A 141-amino-acid chain; its full sequence is Large ribosomal subunit protein uL16 (141 aa).

The segment covering 1-17 (MLQPKRTKYRKVQKGRM) has biased composition (basic residues). The disordered stretch occupies residues 1 to 29 (MLQPKRTKYRKVQKGRMKGNSQRGHELSN).

Belongs to the universal ribosomal protein uL16 family. As to quaternary structure, part of the 50S ribosomal subunit.

In terms of biological role, binds 23S rRNA and is also seen to make contacts with the A and possibly P site tRNAs. The polypeptide is Large ribosomal subunit protein uL16 (Flavobacterium johnsoniae (strain ATCC 17061 / DSM 2064 / JCM 8514 / BCRC 14874 / CCUG 350202 / NBRC 14942 / NCIMB 11054 / UW101) (Cytophaga johnsonae)).